Consider the following 305-residue polypeptide: tRNA pseudouridine synthase B (305 aa).

Residue Asp-48 is the Nucleophile of the active site.

Belongs to the pseudouridine synthase TruB family. Type 1 subfamily.

It catalyses the reaction uridine(55) in tRNA = pseudouridine(55) in tRNA. In terms of biological role, responsible for synthesis of pseudouridine from uracil-55 in the psi GC loop of transfer RNAs. This chain is tRNA pseudouridine synthase B, found in Pseudomonas fluorescens (strain ATCC BAA-477 / NRRL B-23932 / Pf-5).